Here is a 331-residue protein sequence, read N- to C-terminus: 6-phosphogluconolactonase (331 aa).

It belongs to the cycloisomerase 2 family.

It catalyses the reaction 6-phospho-D-glucono-1,5-lactone + H2O = 6-phospho-D-gluconate + H(+). The protein operates within carbohydrate degradation; pentose phosphate pathway; D-ribulose 5-phosphate from D-glucose 6-phosphate (oxidative stage): step 2/3. Catalyzes the hydrolysis of 6-phosphogluconolactone to 6-phosphogluconate. This is 6-phosphogluconolactonase from Salmonella choleraesuis (strain SC-B67).